The sequence spans 317 residues: tRNA(Ile)-lysidine synthase (317 aa).

30 to 35 contacts ATP; sequence SGGSDS.

This sequence belongs to the tRNA(Ile)-lysidine synthase family.

It localises to the cytoplasm. The catalysed reaction is cytidine(34) in tRNA(Ile2) + L-lysine + ATP = lysidine(34) in tRNA(Ile2) + AMP + diphosphate + H(+). Its function is as follows. Ligates lysine onto the cytidine present at position 34 of the AUA codon-specific tRNA(Ile) that contains the anticodon CAU, in an ATP-dependent manner. Cytidine is converted to lysidine, thus changing the amino acid specificity of the tRNA from methionine to isoleucine. In Chlamydia felis (strain Fe/C-56) (Chlamydophila felis), this protein is tRNA(Ile)-lysidine synthase.